We begin with the raw amino-acid sequence, 690 residues long: UvrABC system protein B (690 aa).

A Helicase ATP-binding domain is found at 39-422; that stretch reads EGLDDGLSFQ…EQQHAGQVVE (384 aa). 52–59 contributes to the ATP binding site; that stretch reads GVTGSGKT. The short motif at 105–128 is the Beta-hairpin element; that stretch reads YYDYYQPEAYVPSRDLFIEKDSSI. A Helicase C-terminal domain is found at 443 to 596; sequence QVDDLLAEIG…QIAFNLEHGI (154 aa). Residues 640–675 form the UVR domain; that stretch reads AREIKRLEKSMMECAKNLEFEKAAAARDDLFRLRER.

It belongs to the UvrB family. Forms a heterotetramer with UvrA during the search for lesions. Interacts with UvrC in an incision complex.

It is found in the cytoplasm. In terms of biological role, the UvrABC repair system catalyzes the recognition and processing of DNA lesions. A damage recognition complex composed of 2 UvrA and 2 UvrB subunits scans DNA for abnormalities. Upon binding of the UvrA(2)B(2) complex to a putative damaged site, the DNA wraps around one UvrB monomer. DNA wrap is dependent on ATP binding by UvrB and probably causes local melting of the DNA helix, facilitating insertion of UvrB beta-hairpin between the DNA strands. Then UvrB probes one DNA strand for the presence of a lesion. If a lesion is found the UvrA subunits dissociate and the UvrB-DNA preincision complex is formed. This complex is subsequently bound by UvrC and the second UvrB is released. If no lesion is found, the DNA wraps around the other UvrB subunit that will check the other stand for damage. This Dechloromonas aromatica (strain RCB) protein is UvrABC system protein B.